Reading from the N-terminus, the 469-residue chain is Adenosylhomocysteinase (469 aa).

Substrate-binding residues include Thr-58, Asp-133, and Glu-195. Position 196-198 (196-198 (TTT)) interacts with NAD(+). Substrate-binding residues include Lys-225 and Asp-229. NAD(+) contacts are provided by residues Asn-230, 259–264 (GFGDVG), Glu-282, Asn-317, 338–340 (IGH), and Asn-383.

The protein belongs to the adenosylhomocysteinase family. It depends on NAD(+) as a cofactor.

It localises to the cytoplasm. The catalysed reaction is S-adenosyl-L-homocysteine + H2O = L-homocysteine + adenosine. Its pathway is amino-acid biosynthesis; L-homocysteine biosynthesis; L-homocysteine from S-adenosyl-L-homocysteine: step 1/1. In terms of biological role, may play a key role in the regulation of the intracellular concentration of adenosylhomocysteine. In Rhodopseudomonas palustris (strain TIE-1), this protein is Adenosylhomocysteinase.